The primary structure comprises 287 residues: Protease HtpX (287 aa).

Transmembrane regions (helical) follow at residues 4 to 24 (IFLL…VMSI) and 33 to 53 (GGLL…SLAI). Position 139 (H139) interacts with Zn(2+). E140 is a catalytic residue. H143 provides a ligand contact to Zn(2+). The next 2 helical transmembrane spans lie at 154 to 174 (LIQG…AGII) and 195 to 215 (AVVF…VAYF). E220 is a Zn(2+) binding site.

It belongs to the peptidase M48B family. Requires Zn(2+) as cofactor.

The protein resides in the cell inner membrane. The polypeptide is Protease HtpX (Shewanella sp. (strain MR-4)).